Consider the following 284-residue polypeptide: MNPVLLDGKKLSEKIKEEIRSAIEERKTKNFRIPKLATILVGNNPASETYVSMKVKACHSVGMGSEMIRLREQTTTKELLDVIDKLNSDPNVDGILLQHPTPSGIDERAAFDRIALHKDVDGVTTLSFGKLSMGVETYLPCTPYGMVLLLKEYGIDVAGKNAVVVGRSPILGKPMAMLLTEMNATVTLCHSKTQNLPDIVRNADIIIGAVGKPEFIKADWISNGAILLDAGYNPGNIGDIEISKAKDRSSFYTPVPGGVGPMTIAVLLLQTLYSAKEHFTPPVK.

NADP(+)-binding positions include 166–168 (GRS) and S191.

It belongs to the tetrahydrofolate dehydrogenase/cyclohydrolase family. Homodimer.

It carries out the reaction (6R)-5,10-methylene-5,6,7,8-tetrahydrofolate + NADP(+) = (6R)-5,10-methenyltetrahydrofolate + NADPH. The enzyme catalyses (6R)-5,10-methenyltetrahydrofolate + H2O = (6R)-10-formyltetrahydrofolate + H(+). Its pathway is one-carbon metabolism; tetrahydrofolate interconversion. Functionally, catalyzes the oxidation of 5,10-methylenetetrahydrofolate to 5,10-methenyltetrahydrofolate and then the hydrolysis of 5,10-methenyltetrahydrofolate to 10-formyltetrahydrofolate. The sequence is that of Bifunctional protein FolD from Leptospira interrogans serogroup Icterohaemorrhagiae serovar copenhageni (strain Fiocruz L1-130).